We begin with the raw amino-acid sequence, 430 residues long: Enolase (430 aa).

Gln163 is a (2R)-2-phosphoglycerate binding site. Residue Glu205 is the Proton donor of the active site. Asp242, Glu288, and Asp315 together coordinate Mg(2+). Residues Lys340, Arg369, Ser370, and Lys391 each contribute to the (2R)-2-phosphoglycerate site. Lys340 (proton acceptor) is an active-site residue.

This sequence belongs to the enolase family. It depends on Mg(2+) as a cofactor.

The protein localises to the cytoplasm. The protein resides in the secreted. It is found in the cell surface. It catalyses the reaction (2R)-2-phosphoglycerate = phosphoenolpyruvate + H2O. The protein operates within carbohydrate degradation; glycolysis; pyruvate from D-glyceraldehyde 3-phosphate: step 4/5. In terms of biological role, catalyzes the reversible conversion of 2-phosphoglycerate (2-PG) into phosphoenolpyruvate (PEP). It is essential for the degradation of carbohydrates via glycolysis. The sequence is that of Enolase from Aster yellows witches'-broom phytoplasma (strain AYWB).